Consider the following 178-residue polypeptide: Twist-related protein (178 aa).

The bHLH domain maps to 20–71; it reads QQRACANRRERQRTKELNDAFTLLRKLIPSMPSDKMSKIHTLRIATDYISFL.

As to quaternary structure, efficient DNA binding requires dimerization with another bHLH protein. Homodimer. Forms a heterodimer with hlh-2. In terms of tissue distribution, expressed in defecation-associated muscles and neuron-like cells in the head at the L1 stage. In later larvae, expressed in SM cells and their descendants. Not expressed in differentiated body wall or sex muscles.

It is found in the nucleus. In terms of biological role, acts as a transcriptional regulator. Involved in postembryonic mesodermal cell fate specification. Activates ceh-24 and egl-15 during mesodermal patterning. This Caenorhabditis elegans protein is Twist-related protein (hlh-8).